Consider the following 426-residue polypeptide: Arrestin domain-containing protein 17 (426 aa).

Over residues 320–329 the composition is skewed to polar residues; the sequence is QSAGNGSLPK. The tract at residues 320–340 is disordered; it reads QSAGNGSLPKSSIKDSPPKWD. The span at 331 to 340 shows a compositional bias: basic and acidic residues; the sequence is SIKDSPPKWD.

The protein belongs to the arrestin family. As to quaternary structure, interacts with tax-6. Post-translationally, phosphorylated. Dephosphorylated by tax-6 in vitro. As to expression, expressed from the comma stage to adulthood in the nervous system, including sensory neurons and interneurons posterior to the nerve ring, dorsal and ventral nerve cords, tail ganglia and, CEP, HSN, ASK, ADL, ASH and ASJ neurons.

Functionally, involved in several behavioral responses including chemotaxis towards lysine and adaptation to repeated osmotic stress. In addition, plays a role in resuming egg-laying and locomotion after starvation. This Caenorhabditis elegans protein is Arrestin domain-containing protein 17.